Reading from the N-terminus, the 213-residue chain is MSADIRFDSLKTIVPAVSRETADRLIAFEDLFRKWSKAINLASPSTLADLWNRHILDSVQLFPLAKEATRWLDIGSGGGFPGIVTACFLAERSGGCIDLVESAGKKAAFLRTAAGHLHVPARVHSARIESMWEKIETPQVVTARALASLGDLFTLAEPWLSDGAKALFQKGRDYQREIDESRVGWSFDLVKHPSAIDQASVILEISNLRRKTD.

S-adenosyl-L-methionine contacts are provided by residues glycine 75, phenylalanine 80, 128–129 (IE), and arginine 144.

Belongs to the methyltransferase superfamily. RNA methyltransferase RsmG family.

The protein resides in the cytoplasm. The enzyme catalyses guanosine(527) in 16S rRNA + S-adenosyl-L-methionine = N(7)-methylguanosine(527) in 16S rRNA + S-adenosyl-L-homocysteine. In terms of biological role, specifically methylates the N7 position of guanine in position 527 of 16S rRNA. The protein is Ribosomal RNA small subunit methyltransferase G of Brucella ovis (strain ATCC 25840 / 63/290 / NCTC 10512).